Reading from the N-terminus, the 154-residue chain is Myoglobin (154 aa).

Residues 2 to 148 (GLSDGEWQLV…FRNDMAAKYK (147 aa)) form the Globin domain. Ser-4 is subject to Phosphoserine. His-65 contributes to the nitrite binding site. His-65 serves as a coordination point for O2. At Thr-68 the chain carries Phosphothreonine. His-94 contacts heme b.

This sequence belongs to the globin family. As to quaternary structure, monomeric.

It is found in the cytoplasm. The protein resides in the sarcoplasm. It catalyses the reaction Fe(III)-heme b-[protein] + nitric oxide + H2O = Fe(II)-heme b-[protein] + nitrite + 2 H(+). The catalysed reaction is H2O2 + AH2 = A + 2 H2O. Its function is as follows. Monomeric heme protein which primary function is to store oxygen and facilitate its diffusion within muscle tissues. Reversibly binds oxygen through a pentacoordinated heme iron and enables its timely and efficient release as needed during periods of heightened demand. Depending on the oxidative conditions of tissues and cells, and in addition to its ability to bind oxygen, it also has a nitrite reductase activity whereby it regulates the production of bioactive nitric oxide. Under stress conditions, like hypoxia and anoxia, it also protects cells against reactive oxygen species thanks to its pseudoperoxidase activity. The protein is Myoglobin (MB) of Erythrocebus patas (Red guenon).